The primary structure comprises 110 residues: Phosphoribosyl-ATP pyrophosphatase (110 aa).

This sequence belongs to the PRA-PH family.

The protein resides in the cytoplasm. The enzyme catalyses 1-(5-phospho-beta-D-ribosyl)-ATP + H2O = 1-(5-phospho-beta-D-ribosyl)-5'-AMP + diphosphate + H(+). It functions in the pathway amino-acid biosynthesis; L-histidine biosynthesis; L-histidine from 5-phospho-alpha-D-ribose 1-diphosphate: step 2/9. The chain is Phosphoribosyl-ATP pyrophosphatase from Hahella chejuensis (strain KCTC 2396).